Here is a 228-residue protein sequence, read N- to C-terminus: RNA-free ribonuclease P (228 aa).

This sequence belongs to the HARP family.

The catalysed reaction is Endonucleolytic cleavage of RNA, removing 5'-extranucleotides from tRNA precursor.. In terms of biological role, RNA-free RNase P that catalyzes the removal of the 5'-leader sequence from pre-tRNA to produce the mature 5'-terminus. This is RNA-free ribonuclease P from Methanopyrus kandleri (strain AV19 / DSM 6324 / JCM 9639 / NBRC 100938).